A 397-amino-acid chain; its full sequence is Iripin-2 (397 aa).

The signal sequence occupies residues 1 to 21 (MEDFKMKTLAAFLSLLVLCWA). Asn-109 and Asn-270 each carry an N-linked (GlcNAc...) asparagine glycan.

It belongs to the serpin family. As to quaternary structure, interacts with mouse MCPT4. Female salivary gland. Ovary. Midgut.

The protein resides in the secreted. In terms of biological role, serine protease inhibitor that modulates blood feeding of ticks on vertebrate species. Inhibits host trypsin, thrombin (F2), alpha-chymotrypsin, cathepsin G (CTSG) and mast cell chymase (CMA1). Inhibits host cathepsin G- and thrombin-induced platelet aggregation. Inhibits acute inflammation in the host. Suppresses neutrophil recruitment in inflamed area. Does not inhibit host plasmin (PLG), factor Xa (F10), factor XIa (F11), elastase and proteinase 3/myeloblastin (PRTN3). Its function is as follows. (Microbial infection) Inhibits IL6 production by mouse splenic dendritic cells in response to Borrelia burgdorferi exposure. Decreases levels of STAT3 phosphorylation in mouse splenic dendritic cells in response to Borrelia burgdorferi exposure and in Borrelia-primed CD4+ T-lymphocytes. Inhibits differentiation of mouse Th17 cells, a subset of CD4+ T-lymphocytes that play a crucial role in protection against extracellular bacteria, in response to Borrelia burgdorferi exposure via inhibition of the IL6/STAT3 signaling pathway. This is Iripin-2 from Ixodes ricinus (Common tick).